We begin with the raw amino-acid sequence, 4621 residues long: Dynein axonemal heavy chain 5 (4621 aa).

The interval 1 to 1938 (MFRIGRRQLW…MIHITDVAFI (1938 aa)) is stem. Coiled coils occupy residues 260-305 (WIKQ…DQLK) and 803-825 (LENA…DLIE). Residues 901–921 (VCHENASPSGNTSGRREGHSE) form a disordered region. Coiled-coil stretches lie at residues 1065–1094 (AVKN…SINL) and 1433–1462 (DVNI…DWQA). AAA regions lie at residues 1939 to 2161 (YQNE…VLRT), 2221 to 2440 (TAIS…IQNL), 2547 to 2800 (VYPP…IWQG), and 2913 to 3167 (LYNE…FRRS). Residues 1977–1984 (GPAGTGKT) and 2259–2266 (GPSGSGKT) contribute to the ATP site. The stalk stretch occupies residues 3182–3479 (YKFIYEEKHM…QTLLEDADRC (298 aa)). Coiled coils occupy residues 3186–3299 (YEEK…QTIK), 3423–3490 (LKAN…STLI), and 3729–3814 (ILTE…EEYR). AAA regions lie at residues 3564 to 3794 (LIDA…EVTQ) and 4009 to 4223 (ARKY…FIQN). Residues 4389-4417 (FLRQEIDRMQRVLSLVRSTLTELKLAVDG) are a coiled coil.

Belongs to the dynein heavy chain family. As to quaternary structure, interacts with DNAL1. Consists of at least two heavy chains and a number of intermediate and light chains. Strongly expressed in lung and kidney and weaker expression seen in brain, heart and testis. In the brain, expressed in ependymal cells lining the brain ventricles and the aqueduct.

It localises to the cytoplasm. The protein localises to the cytoskeleton. It is found in the cilium axoneme. Functionally, force generating protein of respiratory cilia. Produces force towards the minus ends of microtubules. Dynein has ATPase activity; the force-producing power stroke is thought to occur on release of ADP. Required for structural and functional integrity of the cilia of ependymal cells lining the brain ventricles. The polypeptide is Dynein axonemal heavy chain 5 (Mus musculus (Mouse)).